Here is a 514-residue protein sequence, read N- to C-terminus: 2-isopropylmalate synthase (514 aa).

The region spanning 4–266 is the Pyruvate carboxyltransferase domain; the sequence is INVFDTSLRD…KTGLKLSELK (263 aa). The Mn(2+) site is built by Asp13, His201, His203, and Asn237. The segment at 390–514 is regulatory domain; sequence ELTALQVTYG…AKREMAKVES (125 aa).

This sequence belongs to the alpha-IPM synthase/homocitrate synthase family. LeuA type 1 subfamily. Homodimer. Mn(2+) is required as a cofactor.

The protein resides in the cytoplasm. It catalyses the reaction 3-methyl-2-oxobutanoate + acetyl-CoA + H2O = (2S)-2-isopropylmalate + CoA + H(+). It functions in the pathway amino-acid biosynthesis; L-leucine biosynthesis; L-leucine from 3-methyl-2-oxobutanoate: step 1/4. Its function is as follows. Catalyzes the condensation of the acetyl group of acetyl-CoA with 3-methyl-2-oxobutanoate (2-ketoisovalerate) to form 3-carboxy-3-hydroxy-4-methylpentanoate (2-isopropylmalate). This is 2-isopropylmalate synthase from Shouchella clausii (strain KSM-K16) (Alkalihalobacillus clausii).